Consider the following 299-residue polypeptide: Bifunctional protein FolD (299 aa).

NADP(+) is bound by residues 168–170 (GRS), Ser-193, and Ile-234.

It belongs to the tetrahydrofolate dehydrogenase/cyclohydrolase family. As to quaternary structure, homodimer.

It carries out the reaction (6R)-5,10-methylene-5,6,7,8-tetrahydrofolate + NADP(+) = (6R)-5,10-methenyltetrahydrofolate + NADPH. The enzyme catalyses (6R)-5,10-methenyltetrahydrofolate + H2O = (6R)-10-formyltetrahydrofolate + H(+). The protein operates within one-carbon metabolism; tetrahydrofolate interconversion. In terms of biological role, catalyzes the oxidation of 5,10-methylenetetrahydrofolate to 5,10-methenyltetrahydrofolate and then the hydrolysis of 5,10-methenyltetrahydrofolate to 10-formyltetrahydrofolate. This Agrobacterium fabrum (strain C58 / ATCC 33970) (Agrobacterium tumefaciens (strain C58)) protein is Bifunctional protein FolD.